We begin with the raw amino-acid sequence, 423 residues long: Serine--tRNA ligase (423 aa).

Position 231-233 (231-233 (TGE)) interacts with L-serine. 262-264 (RSE) contributes to the ATP binding site. Glu285 is an L-serine binding site. Residue 349-352 (EISS) participates in ATP binding. Ser385 is an L-serine binding site.

The protein belongs to the class-II aminoacyl-tRNA synthetase family. Type-1 seryl-tRNA synthetase subfamily. In terms of assembly, homodimer. The tRNA molecule binds across the dimer.

It is found in the cytoplasm. It catalyses the reaction tRNA(Ser) + L-serine + ATP = L-seryl-tRNA(Ser) + AMP + diphosphate + H(+). The catalysed reaction is tRNA(Sec) + L-serine + ATP = L-seryl-tRNA(Sec) + AMP + diphosphate + H(+). The protein operates within aminoacyl-tRNA biosynthesis; selenocysteinyl-tRNA(Sec) biosynthesis; L-seryl-tRNA(Sec) from L-serine and tRNA(Sec): step 1/1. In terms of biological role, catalyzes the attachment of serine to tRNA(Ser). Is also able to aminoacylate tRNA(Sec) with serine, to form the misacylated tRNA L-seryl-tRNA(Sec), which will be further converted into selenocysteinyl-tRNA(Sec). The polypeptide is Serine--tRNA ligase (Coxiella burnetii (strain CbuG_Q212) (Coxiella burnetii (strain Q212))).